Reading from the N-terminus, the 299-residue chain is MKKLQYIDRLTNQRVTEAVCYEKTMTLLYTSRLGKWLSTLLAKTPILSRIYGWIQKRSWTRRKIPGFVKRNHICVQEFKKSLSEFSSFNDFFTRELRPEARPIAQGDNICVAPVDGAYLIYPNIAEFGEFVVKSKHFSLSKLLGDASLVEKYASGSVVFARLALFDYHRFHFPVDCWAGPTRNVNGYLFSVHPMALKDNFNIFCENKRTLTELKTEAFGDVLYLEVGALNVGSIIQTYAPEKRYSKGDEKGFFEIGGSTVIILFQPGTIKFDADLLRNSRMGLETRCLMGQSLGRSLGE.

Active-site charge relay system; for autoendoproteolytic cleavage activity residues include D115, H171, and S258. S258 serves as the catalytic Schiff-base intermediate with substrate; via pyruvic acid; for decarboxylase activity. Residue S258 is modified to Pyruvic acid (Ser); by autocatalysis.

The protein belongs to the phosphatidylserine decarboxylase family. PSD-B subfamily. Prokaryotic type II sub-subfamily. In terms of assembly, heterodimer of a large membrane-associated beta subunit and a small pyruvoyl-containing alpha subunit. Pyruvate serves as cofactor. Post-translationally, is synthesized initially as an inactive proenzyme. Formation of the active enzyme involves a self-maturation process in which the active site pyruvoyl group is generated from an internal serine residue via an autocatalytic post-translational modification. Two non-identical subunits are generated from the proenzyme in this reaction, and the pyruvate is formed at the N-terminus of the alpha chain, which is derived from the carboxyl end of the proenzyme. The autoendoproteolytic cleavage occurs by a canonical serine protease mechanism, in which the side chain hydroxyl group of the serine supplies its oxygen atom to form the C-terminus of the beta chain, while the remainder of the serine residue undergoes an oxidative deamination to produce ammonia and the pyruvoyl prosthetic group on the alpha chain. During this reaction, the Ser that is part of the protease active site of the proenzyme becomes the pyruvoyl prosthetic group, which constitutes an essential element of the active site of the mature decarboxylase.

Its subcellular location is the cell membrane. The enzyme catalyses a 1,2-diacyl-sn-glycero-3-phospho-L-serine + H(+) = a 1,2-diacyl-sn-glycero-3-phosphoethanolamine + CO2. Its pathway is phospholipid metabolism; phosphatidylethanolamine biosynthesis; phosphatidylethanolamine from CDP-diacylglycerol: step 2/2. Functionally, catalyzes the formation of phosphatidylethanolamine (PtdEtn) from phosphatidylserine (PtdSer). This chain is Phosphatidylserine decarboxylase proenzyme, found in Chlamydia felis (strain Fe/C-56) (Chlamydophila felis).